A 257-amino-acid chain; its full sequence is Hydroxyacylglutathione hydrolase (257 aa).

Zn(2+)-binding residues include His56, His58, Asp60, His61, His112, Asp131, and His169.

Belongs to the metallo-beta-lactamase superfamily. Glyoxalase II family. As to quaternary structure, monomer. The cofactor is Zn(2+).

It carries out the reaction an S-(2-hydroxyacyl)glutathione + H2O = a 2-hydroxy carboxylate + glutathione + H(+). Its pathway is secondary metabolite metabolism; methylglyoxal degradation; (R)-lactate from methylglyoxal: step 2/2. Functionally, thiolesterase that catalyzes the hydrolysis of S-D-lactoyl-glutathione to form glutathione and D-lactic acid. This Ectopseudomonas mendocina (strain ymp) (Pseudomonas mendocina) protein is Hydroxyacylglutathione hydrolase.